Here is a 606-residue protein sequence, read N- to C-terminus: Limonene synthase, chloroplastic (606 aa).

A chloroplast-targeting transit peptide spans 1 to 38 (MAIINLPVPTNSSSEVNKHNHLRSCLPSGRATFTTLSA). The (2E)-geranyl diphosphate site is built by Arg320, Asp357, Asp361, Arg497, and Asp500. Mg(2+) contacts are provided by Asp357 and Asp361. Positions 357 to 361 (DDIYD) match the DDXXD motif motif. Residues Asp500, Thr504, and Glu508 each coordinate Mg(2+).

This sequence belongs to the terpene synthase family. Tpsb subfamily. As to quaternary structure, monomer. Mg(2+) serves as cofactor. It depends on Mn(2+) as a cofactor. As to expression, confined to fruits.

It localises to the plastid. It is found in the chloroplast. The enzyme catalyses (2E,6E)-farnesyl diphosphate = (E)-beta-farnesene + diphosphate. The catalysed reaction is (2E)-geranyl diphosphate = limonene + diphosphate. It catalyses the reaction (2E)-geranyl diphosphate = beta-pinene + diphosphate. It carries out the reaction (2E)-geranyl diphosphate = sabinene + diphosphate. The enzyme catalyses (2E)-geranyl diphosphate = beta-myrcene + diphosphate. The catalysed reaction is (2E)-geranyl diphosphate = alpha-pinene + diphosphate. It catalyses the reaction (2E)-geranyl diphosphate = terpinolene + diphosphate. The protein operates within secondary metabolite biosynthesis; terpenoid biosynthesis. Functionally, monoterpene synthase (mono-TPS) involved in the biosynthesis of monoterpenes natural products, constituent of coffee beverage aroma. Catalyzes the conversion of (2E)-geranyl diphosphate (GPP) into limonene, beta-pinene, sabinene and beta-myrcene, and, as minor products, alpha-pinene and alpha-terpinolene. Can also, with a low efficiency, use farnesyl pyrophosphate (FPP) as substrate to produce beta-farnesene. Not able to use geranylgeranyl pyrophosphate (GGPP) as substrate. In Coffea arabica (Arabian coffee), this protein is Limonene synthase, chloroplastic.